Here is a 601-residue protein sequence, read N- to C-terminus: uncharacterized protein (601 aa).

Residues 24-35 (RKSNVVLKKNKG) are compositionally biased toward basic residues. 2 disordered regions span residues 24 to 106 (RKSN…LKLD) and 171 to 219 (YGND…PREE). Positions 54–81 (SQFSSRDNFRTTQTQASSSSEPSDNTNR) are enriched in polar residues. A compositionally biased stretch (basic and acidic residues) spans 92–106 (TPKKEESNAEKLKLD). Phosphoserine occurs at positions 236 and 238. Positions 260–283 (RKRKVLSSSSEDDESSSPEDLLKP) are disordered.

Its subcellular location is the nucleus. This is an uncharacterized protein from Schizosaccharomyces pombe (strain 972 / ATCC 24843) (Fission yeast).